Reading from the N-terminus, the 124-residue chain is Small ribosomal subunit protein uS13 (124 aa).

The disordered stretch occupies residues 94-124 (GLPLRGQRTKNNSRTRKGRRKTVANKKKATK). Residues 100 to 124 (QRTKNNSRTRKGRRKTVANKKKATK) are compositionally biased toward basic residues.

It belongs to the universal ribosomal protein uS13 family. As to quaternary structure, part of the 30S ribosomal subunit. Forms a loose heterodimer with protein S19. Forms two bridges to the 50S subunit in the 70S ribosome.

Located at the top of the head of the 30S subunit, it contacts several helices of the 16S rRNA. In the 70S ribosome it contacts the 23S rRNA (bridge B1a) and protein L5 of the 50S subunit (bridge B1b), connecting the 2 subunits; these bridges are implicated in subunit movement. Contacts the tRNAs in the A and P-sites. This is Small ribosomal subunit protein uS13 from Christiangramia forsetii (strain DSM 17595 / CGMCC 1.15422 / KT0803) (Gramella forsetii).